Consider the following 433-residue polypeptide: Tol-Pal system protein TolB (433 aa).

A signal peptide spans 1–21; the sequence is MIKRLRGLLVMLCCVAGMAVA.

Belongs to the TolB family. As to quaternary structure, the Tol-Pal system is composed of five core proteins: the inner membrane proteins TolA, TolQ and TolR, the periplasmic protein TolB and the outer membrane protein Pal. They form a network linking the inner and outer membranes and the peptidoglycan layer.

The protein resides in the periplasm. Its function is as follows. Part of the Tol-Pal system, which plays a role in outer membrane invagination during cell division and is important for maintaining outer membrane integrity. The protein is Tol-Pal system protein TolB of Pseudomonas putida (strain ATCC 47054 / DSM 6125 / CFBP 8728 / NCIMB 11950 / KT2440).